The sequence spans 473 residues: Ribosomal RNA small subunit methyltransferase F (473 aa).

S-adenosyl-L-methionine is bound by residues 124–130, glutamate 148, aspartate 175, and aspartate 193; that span reads ASAPGSK. The Nucleophile role is filled by cysteine 246.

Belongs to the class I-like SAM-binding methyltransferase superfamily. RsmB/NOP family.

The protein resides in the cytoplasm. The enzyme catalyses cytidine(1407) in 16S rRNA + S-adenosyl-L-methionine = 5-methylcytidine(1407) in 16S rRNA + S-adenosyl-L-homocysteine + H(+). Its function is as follows. Specifically methylates the cytosine at position 1407 (m5C1407) of 16S rRNA. This chain is Ribosomal RNA small subunit methyltransferase F, found in Aliivibrio fischeri (strain MJ11) (Vibrio fischeri).